The primary structure comprises 397 residues: Monooxygenase 1 (397 aa).

The protein belongs to the 3-hydroxybenzoate 6-hydroxylase family. In terms of assembly, monomer. The cofactor is FAD. Expressed in seedlings, roots, leaves, flowers and siliques.

The protein is Monooxygenase 1 of Arabidopsis thaliana (Mouse-ear cress).